The sequence spans 355 residues: Elongation factor Ts (355 aa).

The interval 82–85 (TDFV) is involved in Mg(2+) ion dislocation from EF-Tu.

Belongs to the EF-Ts family.

It localises to the cytoplasm. In terms of biological role, associates with the EF-Tu.GDP complex and induces the exchange of GDP to GTP. It remains bound to the aminoacyl-tRNA.EF-Tu.GTP complex up to the GTP hydrolysis stage on the ribosome. This is Elongation factor Ts (tsf) from Helicobacter pylori (strain ATCC 700392 / 26695) (Campylobacter pylori).